Here is a 156-residue protein sequence, read N- to C-terminus: ATP synthase subunit b (156 aa).

Residues 7-27 (LIGELIAFTVFVLFCMKFVWP) traverse the membrane as a helical segment.

The protein belongs to the ATPase B chain family. As to quaternary structure, F-type ATPases have 2 components, F(1) - the catalytic core - and F(0) - the membrane proton channel. F(1) has five subunits: alpha(3), beta(3), gamma(1), delta(1), epsilon(1). F(0) has three main subunits: a(1), b(2) and c(10-14). The alpha and beta chains form an alternating ring which encloses part of the gamma chain. F(1) is attached to F(0) by a central stalk formed by the gamma and epsilon chains, while a peripheral stalk is formed by the delta and b chains.

It localises to the cell inner membrane. F(1)F(0) ATP synthase produces ATP from ADP in the presence of a proton or sodium gradient. F-type ATPases consist of two structural domains, F(1) containing the extramembraneous catalytic core and F(0) containing the membrane proton channel, linked together by a central stalk and a peripheral stalk. During catalysis, ATP synthesis in the catalytic domain of F(1) is coupled via a rotary mechanism of the central stalk subunits to proton translocation. Functionally, component of the F(0) channel, it forms part of the peripheral stalk, linking F(1) to F(0). The chain is ATP synthase subunit b from Pseudoalteromonas translucida (strain TAC 125).